A 288-amino-acid chain; its full sequence is 4-hydroxy-3-methylbut-2-enyl diphosphate reductase (288 aa).

Cysteine 13 is a [4Fe-4S] cluster binding site. Residues histidine 41 and histidine 75 each coordinate (2E)-4-hydroxy-3-methylbut-2-enyl diphosphate. 2 residues coordinate dimethylallyl diphosphate: histidine 41 and histidine 75. Histidine 41 and histidine 75 together coordinate isopentenyl diphosphate. Residue cysteine 97 participates in [4Fe-4S] cluster binding. Position 130 (histidine 130) interacts with (2E)-4-hydroxy-3-methylbut-2-enyl diphosphate. Dimethylallyl diphosphate is bound at residue histidine 130. Histidine 130 is a binding site for isopentenyl diphosphate. Glutamate 132 acts as the Proton donor in catalysis. Threonine 168 is a (2E)-4-hydroxy-3-methylbut-2-enyl diphosphate binding site. Cysteine 199 is a binding site for [4Fe-4S] cluster. (2E)-4-hydroxy-3-methylbut-2-enyl diphosphate contacts are provided by serine 227, serine 228, asparagine 229, and serine 271. Residues serine 227, serine 228, asparagine 229, and serine 271 each contribute to the dimethylallyl diphosphate site. Isopentenyl diphosphate-binding residues include serine 227, serine 228, asparagine 229, and serine 271.

This sequence belongs to the IspH family. It depends on [4Fe-4S] cluster as a cofactor.

It catalyses the reaction isopentenyl diphosphate + 2 oxidized [2Fe-2S]-[ferredoxin] + H2O = (2E)-4-hydroxy-3-methylbut-2-enyl diphosphate + 2 reduced [2Fe-2S]-[ferredoxin] + 2 H(+). The catalysed reaction is dimethylallyl diphosphate + 2 oxidized [2Fe-2S]-[ferredoxin] + H2O = (2E)-4-hydroxy-3-methylbut-2-enyl diphosphate + 2 reduced [2Fe-2S]-[ferredoxin] + 2 H(+). It participates in isoprenoid biosynthesis; dimethylallyl diphosphate biosynthesis; dimethylallyl diphosphate from (2E)-4-hydroxy-3-methylbutenyl diphosphate: step 1/1. It functions in the pathway isoprenoid biosynthesis; isopentenyl diphosphate biosynthesis via DXP pathway; isopentenyl diphosphate from 1-deoxy-D-xylulose 5-phosphate: step 6/6. Its function is as follows. Catalyzes the conversion of 1-hydroxy-2-methyl-2-(E)-butenyl 4-diphosphate (HMBPP) into a mixture of isopentenyl diphosphate (IPP) and dimethylallyl diphosphate (DMAPP). Acts in the terminal step of the DOXP/MEP pathway for isoprenoid precursor biosynthesis. The polypeptide is 4-hydroxy-3-methylbut-2-enyl diphosphate reductase (Phocaeicola vulgatus (strain ATCC 8482 / DSM 1447 / JCM 5826 / CCUG 4940 / NBRC 14291 / NCTC 11154) (Bacteroides vulgatus)).